An 819-amino-acid chain; its full sequence is Nonribosomal peptide synthetase 9 (819 aa).

Residues 202 to 591 (LQAPTQHAVR…GRKDTQAKIR (390 aa)) are adenylation (A) domain. A Carrier domain is found at 722 to 798 (QPRNERERLI…SLAEFLSSSS (77 aa)). Ser-759 is modified (O-(pantetheine 4'-phosphoryl)serine).

The protein belongs to the NRP synthetase family.

It functions in the pathway secondary metabolite biosynthesis. In terms of biological role, nonribosomal peptide synthetase; part of the Fg3_54/C64 gene cluster that mediates the biosynthesis of the octapeptide fusaoctaxin A, a virulence factor that is required for cell-to-cell invasiveness of plant host. The 2 nonribosomal peptide synthetases NRPS9 and NRPS5 form an assembly line which likely utilizes GABA as a starter unit (loaded on the unique module M1 of NRPS9) and sequentially incorporates seven extender units composed of the residues L-Ala, L-allo-Ile, L-Ser, L-Val, L-Ser, L-Leu and L-Leu, respectively. During the process, each of the residues that are tethered on modules M3-M7 of NRPS5 containing an E domain can undergo an epimerization reaction to produce a D-configuration before the transpeptidation reaction occurs. The elongation of the peptidyl chain might be terminated by module M8-mediated L-Leu incorporation, followed by R domain-catalyzed 4 electron reduction to release the resulting octapeptide from the assembly line as an alcohol. Fusaoctaxin A is cleaved by the cluster specific ABC transporter FGM5 to the pentapeptide fusapentaxin A and the tripeptide fusatrixin A. The other enzymes from the cluster, FGM1, FGM2, FGM3 and FGM9 seem not to be involved in the biosynthesis of fusaoctaxin A and their functions have still to be determined. The polypeptide is Nonribosomal peptide synthetase 9 (Gibberella zeae (strain ATCC MYA-4620 / CBS 123657 / FGSC 9075 / NRRL 31084 / PH-1) (Wheat head blight fungus)).